The following is a 209-amino-acid chain: Orotate phosphoribosyltransferase (209 aa).

5-phospho-alpha-D-ribose 1-diphosphate contacts are provided by residues Arg96, Lys100, His102, and Glu122–Ser130. Ser126 is an orotate binding site.

This sequence belongs to the purine/pyrimidine phosphoribosyltransferase family. PyrE subfamily. Homodimer. Mg(2+) serves as cofactor.

The enzyme catalyses orotidine 5'-phosphate + diphosphate = orotate + 5-phospho-alpha-D-ribose 1-diphosphate. It participates in pyrimidine metabolism; UMP biosynthesis via de novo pathway; UMP from orotate: step 1/2. In terms of biological role, catalyzes the transfer of a ribosyl phosphate group from 5-phosphoribose 1-diphosphate to orotate, leading to the formation of orotidine monophosphate (OMP). This is Orotate phosphoribosyltransferase from Streptococcus pyogenes serotype M12 (strain MGAS2096).